The primary structure comprises 352 residues: Anthranilate phosphoribosyltransferase (352 aa).

5-phospho-alpha-D-ribose 1-diphosphate-binding positions include G82, 85–86 (GD), S90, 92–95 (NIST), 110–118 (KHGNRAVTG), and G122. G82 serves as a coordination point for anthranilate. S94 is a binding site for Mg(2+). N113 is a binding site for anthranilate. R168 provides a ligand contact to anthranilate. 2 residues coordinate Mg(2+): D232 and E233.

It belongs to the anthranilate phosphoribosyltransferase family. In terms of assembly, homodimer. Mg(2+) is required as a cofactor.

The catalysed reaction is N-(5-phospho-beta-D-ribosyl)anthranilate + diphosphate = 5-phospho-alpha-D-ribose 1-diphosphate + anthranilate. It participates in amino-acid biosynthesis; L-tryptophan biosynthesis; L-tryptophan from chorismate: step 2/5. In terms of biological role, catalyzes the transfer of the phosphoribosyl group of 5-phosphorylribose-1-pyrophosphate (PRPP) to anthranilate to yield N-(5'-phosphoribosyl)-anthranilate (PRA). This Methanothermobacter thermautotrophicus (strain ATCC 29096 / DSM 1053 / JCM 10044 / NBRC 100330 / Delta H) (Methanobacterium thermoautotrophicum) protein is Anthranilate phosphoribosyltransferase.